The sequence spans 381 residues: Cyclin-dependent kinase inhibitor CIP1 (381 aa).

The segment covering 1-11 (MLLERLHKRLH) has biased composition (basic residues). A disordered region spans residues 1–30 (MLLERLHKRLHAGSSRRSQENKDKNCKPED). Basic and acidic residues predominate over residues 17–30 (RSQENKDKNCKPED). A phosphothreonine mark is found at threonine 65, threonine 69, and threonine 73.

Interact with the CDC28/CLN2 complex. Post-translationally, phosphorylated during S phase in a CDC28-dependent manner. Phosphorylated at Thr-65 and Thr-73 by HOG1 under osmotic stress. The phosphorylations of Thr-65 and Thr-73 are necessary for CIP1-induced growth inhibition.

It is found in the cytoplasm. The protein localises to the nucleus. In terms of biological role, acts as an inhibitor of the CDC28/CLN2 cyclin-dependent kinase complex. Stabilizes the CDC28 inhibitor SIC1. Negatively regulates the G1/S phase transition. Contributes to osmostress-induced transitory G1 delay. This chain is Cyclin-dependent kinase inhibitor CIP1, found in Saccharomyces cerevisiae (strain ATCC 204508 / S288c) (Baker's yeast).